The sequence spans 499 residues: Cytosol aminopeptidase (499 aa).

2 residues coordinate Mn(2+): Lys267 and Asp272. The active site involves Lys279. Mn(2+)-binding residues include Asp290, Asp349, and Glu351. Arg353 is a catalytic residue.

This sequence belongs to the peptidase M17 family. The cofactor is Mn(2+).

Its subcellular location is the cytoplasm. It catalyses the reaction Release of an N-terminal amino acid, Xaa-|-Yaa-, in which Xaa is preferably Leu, but may be other amino acids including Pro although not Arg or Lys, and Yaa may be Pro. Amino acid amides and methyl esters are also readily hydrolyzed, but rates on arylamides are exceedingly low.. It carries out the reaction Release of an N-terminal amino acid, preferentially leucine, but not glutamic or aspartic acids.. Presumably involved in the processing and regular turnover of intracellular proteins. Catalyzes the removal of unsubstituted N-terminal amino acids from various peptides. The polypeptide is Cytosol aminopeptidase (pepA) (Buchnera aphidicola subsp. Acyrthosiphon pisum (strain APS) (Acyrthosiphon pisum symbiotic bacterium)).